Consider the following 129-residue polypeptide: Small ribosomal subunit protein uS9 (129 aa).

Belongs to the universal ribosomal protein uS9 family.

In Pelodictyon phaeoclathratiforme (strain DSM 5477 / BU-1), this protein is Small ribosomal subunit protein uS9.